A 300-amino-acid polypeptide reads, in one-letter code: MAKPMTITKPVATPLPWRAYLEMTKPRVVALMLLTVLVGMCLAVPGAVPVQPLIAGLVGIGMMAGAAAAYNHLIDRRIDGLMARTYNRPLPKGRISITKALTFATAMAILGFALLYWAVNPLTAWLTFASLIGYAVIYTAYLKRATPQNIVVGGLAGAMPPLLGWTAITGEFHGHALLLVIIIFAWTPPHFWALAIHRRAEYAKVDVPMLPVTHGVEFTKTCIMLYTVLLALACLYPVLVGMCGPLYLVGSTLLSCGFIYKAWQLKYRDKPGLAMQVFRFSIYHLMLLFLLLLVDHYLWS.

The next 8 helical transmembrane spans lie at 28–48, 50–70, 106–126, 150–170, 176–196, 222–242, 243–263, and 280–300; these read VVAL…PGAV, VQPL…AAAY, AMAI…TAWL, IVVG…AITG, ALLL…ALAI, CIML…LVGM, CGPL…YKAW, and FSIY…YLWS.

This sequence belongs to the UbiA prenyltransferase family. Protoheme IX farnesyltransferase subfamily.

The protein localises to the cell inner membrane. The enzyme catalyses heme b + (2E,6E)-farnesyl diphosphate + H2O = Fe(II)-heme o + diphosphate. Its pathway is porphyrin-containing compound metabolism; heme O biosynthesis; heme O from protoheme: step 1/1. Functionally, converts heme B (protoheme IX) to heme O by substitution of the vinyl group on carbon 2 of heme B porphyrin ring with a hydroxyethyl farnesyl side group. The protein is Protoheme IX farnesyltransferase 1 of Shewanella loihica (strain ATCC BAA-1088 / PV-4).